A 318-amino-acid chain; its full sequence is Taste receptor type 2 member 7 (318 aa).

Topologically, residues 1–9 (MADKVQTTL) are extracellular. Residues 10–30 (LFLAVGEFSVGILGNAFIGLV) traverse the membrane as a helical segment. The Cytoplasmic segment spans residues 31–55 (NCMDWVKKRKIASIDLILTSLAISR). A helical membrane pass occupies residues 56–76 (ICLLCIILLDCFTLVLYPDVY). The Extracellular portion of the chain corresponds to 77–94 (ATGKEMRIIDFFWTLTNH). The chain crosses the membrane as a helical span at residues 95–115 (LSIWFATCLSIYYFFKIGNFF). The Cytoplasmic segment spans residues 116-128 (HPLFLWMKWRIDR). Residues 129–149 (VISWILLGCVVLSVFISLPAT) form a helical membrane-spanning segment. Residues 150-187 (ENLNADFRFCVKAKRKTNLTWSCRVNKTQHASTKLFLN) lie on the Extracellular side of the membrane. N-linked (GlcNAc...) asparagine glycosylation is found at N167 and N175. A helical membrane pass occupies residues 188 to 208 (LATLLPFCVCLMSFFLLILSL). Topologically, residues 209 to 235 (RRHIRRMQLSATGCRDPSTEAHVRALK) are cytoplasmic. Residues 236–256 (AVISFLLLFIAYYLSFLIATS) form a helical membrane-spanning segment. At 257 to 266 (SYFMPETELA) the chain is on the extracellular side. A helical membrane pass occupies residues 267 to 287 (VIFGESIALIYPSSHSFILIL). Topologically, residues 288–318 (GNNKLRYVSLKVIWKVMSILKGRKFQQHKQI) are cytoplasmic.

This sequence belongs to the G-protein coupled receptor T2R family.

It is found in the membrane. In terms of biological role, gustducin-coupled receptor implicated in the perception of bitter compounds in the oral cavity and the gastrointestinal tract. Signals through PLCB2 and the calcium-regulated cation channel TRPM5. This Gorilla gorilla gorilla (Western lowland gorilla) protein is Taste receptor type 2 member 7 (TAS2R7).